The primary structure comprises 346 residues: Tetraacyldisaccharide 4'-kinase (346 aa).

54-61 lines the ATP pocket; the sequence is TVGGAGKT.

This sequence belongs to the LpxK family.

The enzyme catalyses a lipid A disaccharide + ATP = a lipid IVA + ADP + H(+). It functions in the pathway glycolipid biosynthesis; lipid IV(A) biosynthesis; lipid IV(A) from (3R)-3-hydroxytetradecanoyl-[acyl-carrier-protein] and UDP-N-acetyl-alpha-D-glucosamine: step 6/6. In terms of biological role, transfers the gamma-phosphate of ATP to the 4'-position of a tetraacyldisaccharide 1-phosphate intermediate (termed DS-1-P) to form tetraacyldisaccharide 1,4'-bis-phosphate (lipid IVA). The sequence is that of Tetraacyldisaccharide 4'-kinase from Sinorhizobium fredii (strain NBRC 101917 / NGR234).